A 142-amino-acid chain; its full sequence is Small ribosomal subunit protein bS6 (142 aa).

The segment covering 110–133 (NKKPSHAKEKHEKTEHTHSHHLEE) has biased composition (basic and acidic residues). The tract at residues 110–142 (NKKPSHAKEKHEKTEHTHSHHLEEAESVGSHSE) is disordered.

The protein belongs to the bacterial ribosomal protein bS6 family.

In terms of biological role, binds together with bS18 to 16S ribosomal RNA. The chain is Small ribosomal subunit protein bS6 from Helicobacter pylori (strain HPAG1).